Here is a 525-residue protein sequence, read N- to C-terminus: ADP-ribosylation factor GTPase-activating protein 3 (525 aa).

The Arf-GAP domain maps to 10 to 126 (LAIFKRLRSV…IKTLATQATR (117 aa)). Residues 25–48 (CFDCGAKNPSWASISYGVFLCIDC) form a C4-type zinc finger. The interval 160 to 233 (VSGATQASAQ…KGLGAKKGSL (74 aa)) is disordered. The span at 162 to 177 (GATQASAQPEPASSTP) shows a compositional bias: polar residues. Over residues 222-233 (AKKGLGAKKGSL) the composition is skewed to low complexity. 4 positions are modified to phosphoserine: serine 232, serine 242, serine 271, and serine 275. The tract at residues 249-271 (QAQAVDKRKEQEDLARGTPKEES) is disordered. Basic and acidic residues predominate over residues 293-305 (LNLSGQKKAEAER). Disordered stretches follow at residues 293-364 (LNLS…SSSR) and 377-428 (FSSW…EAQK). Positions 319–333 (HSVTSDMQTIEQESP) are enriched in polar residues. At serine 332 the chain carries Phosphoserine. Positions 349–363 (SYFSSSSKWSEQSSS) are enriched in low complexity. Phosphoserine is present on serine 379. The span at 387–398 (YWKKDSSRDPEP) shows a compositional bias: basic and acidic residues. Phosphoserine occurs at positions 437, 460, 462, 464, 466, and 467.

The protein localises to the cytoplasm. The protein resides in the golgi apparatus membrane. With respect to regulation, GAP activity stimulated by phosphatidylinositol 4,5-bisphosphate (PIP2). Functionally, GTPase-activating protein (GAP) for ADP ribosylation factor 1 (ARF1). Hydrolysis of ARF1-bound GTP may lead to dissociation of coatomer from Golgi-derived membranes to allow fusion with target membranes. The polypeptide is ADP-ribosylation factor GTPase-activating protein 3 (Rattus norvegicus (Rat)).